Consider the following 201-residue polypeptide: ATP-dependent Clp protease proteolytic subunit 2 (201 aa).

Catalysis depends on serine 101, which acts as the Nucleophile. Histidine 126 is a catalytic residue.

This sequence belongs to the peptidase S14 family. As to quaternary structure, fourteen ClpP subunits assemble into 2 heptameric rings which stack back to back to give a disk-like structure with a central cavity, resembling the structure of eukaryotic proteasomes.

Its subcellular location is the cytoplasm. The enzyme catalyses Hydrolysis of proteins to small peptides in the presence of ATP and magnesium. alpha-casein is the usual test substrate. In the absence of ATP, only oligopeptides shorter than five residues are hydrolyzed (such as succinyl-Leu-Tyr-|-NHMec, and Leu-Tyr-Leu-|-Tyr-Trp, in which cleavage of the -Tyr-|-Leu- and -Tyr-|-Trp bonds also occurs).. Cleaves peptides in various proteins in a process that requires ATP hydrolysis. Has a chymotrypsin-like activity. Plays a major role in the degradation of misfolded proteins. This is ATP-dependent Clp protease proteolytic subunit 2 from Prochlorococcus marinus subsp. pastoris (strain CCMP1986 / NIES-2087 / MED4).